Here is a 455-residue protein sequence, read N- to C-terminus: Beta-1,3-galactosyl-O-glycosyl-glycoprotein beta-1,6-N-acetylglucosaminyltransferase 4 (455 aa).

Residues 1-13 (MKIFRCCFKYTLQ) lie on the Cytoplasmic side of the membrane. Residues 14-34 (QKLFILLLTLWLFSLLKLLNV) form a helical; Signal-anchor for type II membrane protein membrane-spanning segment. Topologically, residues 35–455 (GRLLFPQRDI…TEGTRQSHTL (421 aa)) are lumenal. Residue asparagine 73 is glycosylated (N-linked (GlcNAc...) asparagine). 4 disulfides stabilise this stretch: cysteine 74–cysteine 228, cysteine 162–cysteine 383, cysteine 183–cysteine 210, and cysteine 392–cysteine 424. Asparagine 287 and asparagine 382 each carry an N-linked (GlcNAc...) asparagine glycan.

It belongs to the glycosyltransferase 14 family.

It is found in the golgi apparatus membrane. It carries out the reaction a 3-O-[beta-D-galactosyl-(1-&gt;3)-N-acetyl-alpha-D-galactosaminyl]-L-seryl-[protein] + UDP-N-acetyl-alpha-D-glucosamine = 3-O-{beta-D-galactosyl-(1-&gt;3)-[N-acetyl-beta-D-glucosaminyl-(1-&gt;6)]-N-acetyl-alpha-D-galactosaminyl}-L-seryl-[protein] + UDP + H(+). The catalysed reaction is a 3-O-[beta-D-galactosyl-(1-&gt;3)-N-acetyl-alpha-D-galactosaminyl]-L-threonyl-[protein] + UDP-N-acetyl-alpha-D-glucosamine = a 3-O-{beta-D-galactosyl-(1-&gt;3)-[N-acetyl-beta-D-glucosaminyl-(1-&gt;6)]-N-acetyl-alpha-D-galactosaminyl}-L-threonyl-[protein] + UDP + H(+). The protein operates within protein modification; protein glycosylation. Glycosyltransferase that mediates core 2 O-glycan branching, an important step in mucin-type biosynthesis. Does not have core 4 O-glycan or I-branching enzyme activity. The chain is Beta-1,3-galactosyl-O-glycosyl-glycoprotein beta-1,6-N-acetylglucosaminyltransferase 4 (Gcnt4) from Mus musculus (Mouse).